The following is a 347-amino-acid chain: 8-amino-8-demethylriboflavin N,N-dimethyltransferase (347 aa).

S-adenosyl-L-methionine-binding positions include aspartate 209 and 235–237; that span reads GDF.

Belongs to the class I-like SAM-binding methyltransferase superfamily. Cation-independent O-methyltransferase family. As to quaternary structure, homodimer.

The catalysed reaction is 8-amino-8-demethylriboflavin + 2 S-adenosyl-L-methionine = roseoflavin + 2 S-adenosyl-L-homocysteine + 2 H(+). It functions in the pathway antibiotic biosynthesis. Catalyzes the S-adenosyl methionine-dependent conversion of 8-amino-8-demethyl-D-riboflavin (AF) into 8-methylamino-8-demethyl-D-riboflavin (MAF) and roseoflavin (RoF), the last two steps in the biosynthesis of the antibiotic roseoflavin. This is 8-amino-8-demethylriboflavin N,N-dimethyltransferase from Streptomyces davaonensis (strain DSM 101723 / JCM 4913 / KCC S-0913 / 768).